A 587-amino-acid chain; its full sequence is Glucosylglycerate phosphorylase (587 aa).

The Nucleophile role is filled by aspartate 236.

Belongs to the glycosyl hydrolase 13 family. Glucosylglycerate phosphorylase subfamily.

The catalysed reaction is (2R)-2-O-(alpha-D-glucopyranosyl)-glycerate + phosphate = (R)-glycerate + alpha-D-glucose 1-phosphate. Its function is as follows. Catalyzes the reversible phosphorolysis of glucosylglycerate into alpha-D-glucose 1-phosphate (Glc1P) and D-glycerate. May be a regulator of intracellular levels of glucosylglycerate, a compatible solute that primarily protects organisms facing salt stress and very specific nutritional constraints. Cannot catalyze the phosphorolysis of sucrose. This chain is Glucosylglycerate phosphorylase, found in Spirochaeta thermophila (strain ATCC 700085 / DSM 6578 / Z-1203).